A 159-amino-acid polypeptide reads, in one-letter code: Phosphopantetheine adenylyltransferase (159 aa).

T10 serves as a coordination point for substrate. ATP contacts are provided by residues 10–11 (TF) and H18. 3 residues coordinate substrate: K42, M74, and R88. ATP contacts are provided by residues 89-91 (GLR), E99, and 124-130 (WSFISSS).

Belongs to the bacterial CoaD family. Homohexamer. Requires Mg(2+) as cofactor.

It localises to the cytoplasm. It carries out the reaction (R)-4'-phosphopantetheine + ATP + H(+) = 3'-dephospho-CoA + diphosphate. It participates in cofactor biosynthesis; coenzyme A biosynthesis; CoA from (R)-pantothenate: step 4/5. Functionally, reversibly transfers an adenylyl group from ATP to 4'-phosphopantetheine, yielding dephospho-CoA (dPCoA) and pyrophosphate. This Salmonella choleraesuis (strain SC-B67) protein is Phosphopantetheine adenylyltransferase.